We begin with the raw amino-acid sequence, 340 residues long: Manganese-dependent ADP-ribose/CDP-alcohol diphosphatase (340 aa).

M1 is subject to N-acetylmethionine. Zn(2+) is bound by residues D25, Q27, D74, N110, H241, H278, and H280.

The protein belongs to the ADPRibase-Mn family. In terms of assembly, monomer. Requires Mg(2+) as cofactor.

It carries out the reaction CDP-choline + H2O = phosphocholine + CMP + 2 H(+). The enzyme catalyses ADP-D-ribose + H2O = D-ribose 5-phosphate + AMP + 2 H(+). The catalysed reaction is CDP-glycerol + H2O = sn-glycerol 3-phosphate + CMP + 2 H(+). In terms of biological role, hydrolyzes ADP-ribose, IDP-ribose, CDP-glycerol, CDP-choline and CDP-ethanolamine, but not other non-reducing ADP-sugars or CDP-glucose. May be involved in immune cell signaling as suggested by the second-messenger role of ADP-ribose, which activates TRPM2 as a mediator of oxidative/nitrosative stress. This Mus musculus (Mouse) protein is Manganese-dependent ADP-ribose/CDP-alcohol diphosphatase (Adprm).